Reading from the N-terminus, the 142-residue chain is Nucleoside diphosphate kinase (142 aa).

Lys11, Phe59, Arg87, Thr93, Arg104, and Asn114 together coordinate ATP. The active-site Pros-phosphohistidine intermediate is the His117.

It belongs to the NDK family. Homotetramer. Requires Mg(2+) as cofactor.

The protein localises to the cytoplasm. It catalyses the reaction a 2'-deoxyribonucleoside 5'-diphosphate + ATP = a 2'-deoxyribonucleoside 5'-triphosphate + ADP. The enzyme catalyses a ribonucleoside 5'-diphosphate + ATP = a ribonucleoside 5'-triphosphate + ADP. Its function is as follows. Major role in the synthesis of nucleoside triphosphates other than ATP. The ATP gamma phosphate is transferred to the NDP beta phosphate via a ping-pong mechanism, using a phosphorylated active-site intermediate. The polypeptide is Nucleoside diphosphate kinase (Aeromonas hydrophila subsp. hydrophila (strain ATCC 7966 / DSM 30187 / BCRC 13018 / CCUG 14551 / JCM 1027 / KCTC 2358 / NCIMB 9240 / NCTC 8049)).